The following is a 331-amino-acid chain: Probable mannose-1-phosphate guanylyltransferase 3 (331 aa).

Lysine 3 serves as a coordination point for diphosphate. Positions 66, 90, 92, 127, and 154 each coordinate GDP-alpha-D-mannose.

Belongs to the transferase hexapeptide repeat family.

The enzyme catalyses alpha-D-mannose 1-phosphate + GTP + H(+) = GDP-alpha-D-mannose + diphosphate. It functions in the pathway nucleotide-sugar biosynthesis; GDP-alpha-D-mannose biosynthesis; GDP-alpha-D-mannose from alpha-D-mannose 1-phosphate (GTP route): step 1/1. Catalyzes a reaction of the Smirnoff-Wheeler pathway, the major route to ascorbate biosynthesis in plants. The protein is Probable mannose-1-phosphate guanylyltransferase 3 of Arabidopsis thaliana (Mouse-ear cress).